The following is a 480-amino-acid chain: MLAVQNMKFGIFLLWWGWVLAAESTAHWPGREVHEPSRKGSRPQRQRRGAHDDAHKQGSPILRRSSDITKSPLTKSEQLLRIDDHDFSMRPGFGGPAIPVGVDVQVESLDSISEVDMDFTMTLYLRHYWKDERLSFPSSNNLSMTFDGRLVKKIWVPDMFFVHSKRSFIHDTTTDNVMLRVQPDGKVLYSLRVTVTAMCNMDFSRFPLDTQTCSLEIESYAYTEDDLMLYWKKGNDSLKTDERISLSQFLIQEFHTTTKLAFYSSTGWYNRLYINFTLRRHIFFFLLQTYFPATLMVMLSWVSFWIDRRAVPARVPLGITTVLTMSTIITGVNASMPRVSYIKAVDIYLWVSFVFVFLSVLEYAAVNYLTTVQERKERKLREKISCTCGLPQPRGVMLDSSYSDGEVNDLGGYMPENGEKPDRMMVQLTLASERGSPQRKGQRGSYVSMRINTHAIDKYSRIIFPAAYILFNLIYWSIFS.

The first 21 residues, 1-21, serve as a signal peptide directing secretion; that stretch reads MLAVQNMKFGIFLLWWGWVLA. The Extracellular portion of the chain corresponds to 22–281; sequence AESTAHWPGR…LYINFTLRRH (260 aa). Residues 29 to 38 show a composition bias toward basic and acidic residues; it reads PGREVHEPSR. Residues 29–67 are disordered; that stretch reads PGREVHEPSRKGSRPQRQRRGAHDDAHKQGSPILRRSSD. A compositionally biased stretch (basic residues) spans 39–48; the sequence is KGSRPQRQRR. Arg-126 provides a ligand contact to 4-aminobutanoate. The N-linked (GlcNAc...) asparagine glycan is linked to Asn-141. Residue Ser-190 coordinates 4-aminobutanoate. Cys-199 and Cys-213 are disulfide-bonded. Glu-218 lines the 4-aminobutanoate pocket. 2 N-linked (GlcNAc...) asparagine glycosylation sites follow: Asn-235 and Asn-275. A helical membrane pass occupies residues 282–302; sequence IFFFLLQTYFPATLMVMLSWV. Topologically, residues 303-314 are cytoplasmic; that stretch reads SFWIDRRAVPAR. The chain crosses the membrane as a helical span at residues 315 to 335; sequence VPLGITTVLTMSTIITGVNAS. Residues 336-346 are Extracellular-facing; that stretch reads MPRVSYIKAVD. The chain crosses the membrane as a helical span at residues 347–367; it reads IYLWVSFVFVFLSVLEYAAVN. The Cytoplasmic portion of the chain corresponds to 368–458; that stretch reads YLTTVQERKE…MRINTHAIDK (91 aa). Residues 459 to 479 traverse the membrane as a helical segment; that stretch reads YSRIIFPAAYILFNLIYWSIF. Ser-480 is a topological domain (extracellular).

Belongs to the ligand-gated ion channel (TC 1.A.9) family. Gamma-aminobutyric acid receptor (TC 1.A.9.5) subfamily. GABRR1 sub-subfamily. In terms of assembly, three rho subunits (rho-1/GBRR1, rho-2/GBRR2 and rho-3/GBRR3) coassemble either to form functional homopentamers or heteropentamers. Rho-1/GBRR1 subunits can also associate with alpha-1/GBRA1 subunits to form a functional GABAAR. Interacts with SQSTM1. Expressed in the cerebellum.

The protein resides in the postsynaptic cell membrane. The protein localises to the cell membrane. The catalysed reaction is chloride(in) = chloride(out). With respect to regulation, inhibited by TPMPA, a rho-specific antagonist, when forming a homopentamer. In contrast with other GABAARs, rho-1 GABAAR is not inhibited by bicuculline when forming a homopentamer. Rho subunit of the pentameric ligand-gated chloride channels responsible for mediating the effects of gamma-aminobutyric acid (GABA), the major inhibitory neurotransmitter in the brain. Rho-containing GABA-gated chloride channels are a subclass of GABA(A) receptors (GABAARs) entirely composed of rho subunits, where GABA molecules bind at the rho intersubunit interfaces. When activated by GABA, rho-GABAARs selectively allow the flow of chloride anions across the cell membrane down their electrochemical gradient. Rho-1 subunits are primarily expressed in retina where rho-1-containing GABAARs play a role in retinal neurotransmission. Rho-1 GABAARs are also involved in neuronal tonic (extrasynaptic) and phasic (synaptic) transmission in the Purkinje neurons of the cerebellum. Rho-1 GABAARs may also contribute to the regulation of glial development in the cerebellum by controlling extrasynaptic transmission. The chain is Gamma-aminobutyric acid receptor subunit rho-1 from Mus musculus (Mouse).